We begin with the raw amino-acid sequence, 469 residues long: Glutamate--tRNA ligase (469 aa).

A 'HIGH' region motif is present at residues 12–22 (PSPTGFIHLGN). Residues 244-248 (KMSKR) carry the 'KMSKS' region motif. Residue Lys247 coordinates ATP.

It belongs to the class-I aminoacyl-tRNA synthetase family. Glutamate--tRNA ligase type 1 subfamily. As to quaternary structure, monomer.

It is found in the cytoplasm. The enzyme catalyses tRNA(Glu) + L-glutamate + ATP = L-glutamyl-tRNA(Glu) + AMP + diphosphate. Functionally, catalyzes the attachment of glutamate to tRNA(Glu) in a two-step reaction: glutamate is first activated by ATP to form Glu-AMP and then transferred to the acceptor end of tRNA(Glu). The protein is Glutamate--tRNA ligase of Acidovorax sp. (strain JS42).